Consider the following 420-residue polypeptide: Multiple sugar-binding protein (420 aa).

The N-terminal stretch at 1 to 22 (MKWYKKIGLLGIVGLTSVLLAA) is a signal peptide. Cysteine 23 carries the N-palmitoyl cysteine lipid modification. Cysteine 23 is lipidated: S-diacylglycerol cysteine.

Belongs to the bacterial solute-binding protein 1 family.

It is found in the cell membrane. Its function is as follows. Involved in a binding protein-dependent transport system responsible for the uptake of melibiose, raffinose and isomaltotriose. The polypeptide is Multiple sugar-binding protein (Streptococcus mutans serotype c (strain ATCC 700610 / UA159)).